Consider the following 429-residue polypeptide: Enolase (429 aa).

(2R)-2-phosphoglycerate is bound at residue glutamine 163. The active-site Proton donor is the glutamate 205. Positions 242, 287, and 314 each coordinate Mg(2+). Positions 339, 368, 369, and 390 each coordinate (2R)-2-phosphoglycerate. Catalysis depends on lysine 339, which acts as the Proton acceptor.

Belongs to the enolase family. The cofactor is Mg(2+).

It is found in the cytoplasm. Its subcellular location is the secreted. It localises to the cell surface. The enzyme catalyses (2R)-2-phosphoglycerate = phosphoenolpyruvate + H2O. It functions in the pathway carbohydrate degradation; glycolysis; pyruvate from D-glyceraldehyde 3-phosphate: step 4/5. Functionally, catalyzes the reversible conversion of 2-phosphoglycerate (2-PG) into phosphoenolpyruvate (PEP). It is essential for the degradation of carbohydrates via glycolysis. The protein is Enolase of Anaeromyxobacter dehalogenans (strain 2CP-1 / ATCC BAA-258).